A 429-amino-acid polypeptide reads, in one-letter code: Phosphoglucosamine mutase (429 aa).

Serine 96 functions as the Phosphoserine intermediate in the catalytic mechanism. Residues serine 96, aspartate 230, aspartate 232, and aspartate 234 each coordinate Mg(2+). At serine 96 the chain carries Phosphoserine.

It belongs to the phosphohexose mutase family. Requires Mg(2+) as cofactor. Activated by phosphorylation.

It carries out the reaction alpha-D-glucosamine 1-phosphate = D-glucosamine 6-phosphate. In terms of biological role, catalyzes the conversion of glucosamine-6-phosphate to glucosamine-1-phosphate. This is Phosphoglucosamine mutase from Thermotoga petrophila (strain ATCC BAA-488 / DSM 13995 / JCM 10881 / RKU-1).